The chain runs to 525 residues: Ribosomal protein S6 kinase beta-1 (525 aa).

The segment at 1-54 (MRRRRRRDGFYPAPDFRDREAEDMAGVFDIDLDQPEDAGSEDELEEGGQLNESM) is disordered. Residues 28–32 (FDIDL) carry the TOS motif motif. Positions 30–46 (IDLDQPEDAGSEDELEE) are enriched in acidic residues. One can recognise a Protein kinase domain in the interval 91–352 (FELLRVLGKG…AGEVQAHPFF (262 aa)). ATP is bound by residues 97 to 105 (LGKGGYGKV) and K123. D218 functions as the Proton acceptor in the catalytic mechanism. The residue at position 252 (T252) is a Phosphothreonine; by PDPK1. The AGC-kinase C-terminal domain maps to 353–423 (RHINWEELLA…VAPSVLESVK (71 aa)). A disordered region spans residues 380-399 (SQFDSKFTRQTPVDSPDDST). Residues 381–399 (QFDSKFTRQTPVDSPDDST) are compositionally biased toward polar residues. S394 is modified (phosphoserine). At T412 the chain carries Phosphothreonine; by MTOR, NEK6 and NEK7. The tract at residues 424-525 (EKFSFEPKIR…KRPEHLRMNL (102 aa)) is autoinhibitory domain. A phosphoserine mark is found at S434 and S441. T444 carries the phosphothreonine modification. S447 and S452 each carry phosphoserine. K516 is modified (N6-acetyllysine).

This sequence belongs to the protein kinase superfamily. AGC Ser/Thr protein kinase family. S6 kinase subfamily. In terms of assembly, interacts with PPP1R9A/neurabin-1. Interacts with RPTOR. Interacts with IRS1. Interacts with EIF3B and EIF3C. Interacts with TRAF4. Interacts with POLDIP3. Interacts (via N-terminus) with IER5. As to quaternary structure, (Microbial infection) Interacts with Mumps virus phosphoprotein; this interaction may play a role in the viral replication and transcription. In terms of processing, phosphorylation at Thr-412 is regulated by mTORC1. The phosphorylation at this site is maintained by an agonist-dependent autophosphorylation mechanism. Activated by phosphorylation at Thr-252 by PDPK1. Dephosphorylation by PPP1CC at Thr-412 in mitochondrion. Widely expressed.

It localises to the synapse. The protein localises to the synaptosome. The protein resides in the mitochondrion outer membrane. Its subcellular location is the mitochondrion. It is found in the nucleus. It localises to the cytoplasm. The catalysed reaction is L-seryl-[protein] + ATP = O-phospho-L-seryl-[protein] + ADP + H(+). It carries out the reaction L-threonyl-[protein] + ATP = O-phospho-L-threonyl-[protein] + ADP + H(+). With respect to regulation, activation requires multiple phosphorylation events on serine/threonine residues. Activation appears to be first mediated by phosphorylation of multiple sites in the autoinhibitory domain, which facilitates phosphorylation at Thr-412, disrupting the autoinhibitory mechanism and allowing phosphorylation of Thr-252 by PDPK1. The active conformation of the kinase is believed to be stabilized by a mechanism involving three conserved phosphorylation sites located in the kinase domain activation loop (Thr-252) and in the AGC-kinase C-terminal domain (Ser-394 in the middle of the tail/linker region and Thr-412 within a hydrophobic motif at its end). Activated by mTORC1; isoform Alpha I and isoform Alpha II are sensitive to rapamycin, which inhibits activating phosphorylation at Thr-412. Activated by PDPK1. In terms of biological role, serine/threonine-protein kinase that acts downstream of mTOR signaling in response to growth factors and nutrients to promote cell proliferation, cell growth and cell cycle progression. Regulates protein synthesis through phosphorylation of EIF4B, RPS6 and EEF2K, and contributes to cell survival by repressing the pro-apoptotic function of BAD. Under conditions of nutrient depletion, the inactive form associates with the EIF3 translation initiation complex. Upon mitogenic stimulation, phosphorylation by the mechanistic target of rapamycin complex 1 (mTORC1) leads to dissociation from the EIF3 complex and activation. The active form then phosphorylates and activates several substrates in the pre-initiation complex, including the EIF2B complex and the cap-binding complex component EIF4B. Also controls translation initiation by phosphorylating a negative regulator of EIF4A, PDCD4, targeting it for ubiquitination and subsequent proteolysis. Promotes initiation of the pioneer round of protein synthesis by phosphorylating POLDIP3/SKAR. In response to IGF1, activates translation elongation by phosphorylating EEF2 kinase (EEF2K), which leads to its inhibition and thus activation of EEF2. Also plays a role in feedback regulation of mTORC2 by mTORC1 by phosphorylating MAPKAP1/SIN1, MTOR and RICTOR, resulting in the inhibition of mTORC2 and AKT1 signaling. Also involved in feedback regulation of mTORC1 and mTORC2 by phosphorylating DEPTOR. Mediates cell survival by phosphorylating the pro-apoptotic protein BAD and suppressing its pro-apoptotic function. Phosphorylates mitochondrial URI1 leading to dissociation of a URI1-PPP1CC complex. The free mitochondrial PPP1CC can then dephosphorylate RPS6KB1 at Thr-412, which is proposed to be a negative feedback mechanism for the RPS6KB1 anti-apoptotic function. Mediates TNF-alpha-induced insulin resistance by phosphorylating IRS1 at multiple serine residues, resulting in accelerated degradation of IRS1. In cells lacking functional TSC1-2 complex, constitutively phosphorylates and inhibits GSK3B. May be involved in cytoskeletal rearrangement through binding to neurabin. Phosphorylates and activates the pyrimidine biosynthesis enzyme CAD, downstream of MTOR. Following activation by mTORC1, phosphorylates EPRS and thereby plays a key role in fatty acid uptake by adipocytes and also most probably in interferon-gamma-induced translation inhibition. The sequence is that of Ribosomal protein S6 kinase beta-1 (RPS6KB1) from Homo sapiens (Human).